Reading from the N-terminus, the 100-residue chain is NADH-quinone oxidoreductase subunit K 2 (100 aa).

A run of 3 helical transmembrane segments spans residues L4–I24, I29–L49, and I60–M80.

This sequence belongs to the complex I subunit 4L family. In terms of assembly, NDH-1 is composed of 14 different subunits. Subunits NuoA, H, J, K, L, M, N constitute the membrane sector of the complex.

Its subcellular location is the cell inner membrane. It carries out the reaction a quinone + NADH + 5 H(+)(in) = a quinol + NAD(+) + 4 H(+)(out). Its function is as follows. NDH-1 shuttles electrons from NADH, via FMN and iron-sulfur (Fe-S) centers, to quinones in the respiratory chain. The immediate electron acceptor for the enzyme in this species is believed to be ubiquinone. Couples the redox reaction to proton translocation (for every two electrons transferred, four hydrogen ions are translocated across the cytoplasmic membrane), and thus conserves the redox energy in a proton gradient. The polypeptide is NADH-quinone oxidoreductase subunit K 2 (Geobacter metallireducens (strain ATCC 53774 / DSM 7210 / GS-15)).